We begin with the raw amino-acid sequence, 229 residues long: Putative germin-like protein 3-4 (229 aa).

The N-terminal stretch at 1-31 (MEHSFKTITAGVVFVVLLLQQAPVLIRATDA) is a signal peptide. C38 and C53 are joined by a disulfide. Residues 67–219 (SKIATGGDVN…ALRVDTGVVE (153 aa)) enclose the Cupin type-1 domain. Residues N80 and N83 are each glycosylated (N-linked (GlcNAc...) asparagine). Residues H116, H118, E123, and H165 each coordinate Mn(2+).

The protein belongs to the germin family. As to quaternary structure, oligomer (believed to be a pentamer but probably hexamer).

It localises to the secreted. It is found in the extracellular space. The protein localises to the apoplast. May play a role in plant defense. Probably has no oxalate oxidase activity even if the active site is conserved. The polypeptide is Putative germin-like protein 3-4 (Oryza sativa subsp. japonica (Rice)).